A 102-amino-acid chain; its full sequence is Small ribosomal subunit protein uS10 (102 aa).

The protein belongs to the universal ribosomal protein uS10 family. As to quaternary structure, part of the 30S ribosomal subunit.

Functionally, involved in the binding of tRNA to the ribosomes. This is Small ribosomal subunit protein uS10 from Thermobifida fusca (strain YX).